The primary structure comprises 206 residues: Ribonuclease M5 (206 aa).

A Toprim domain is found at 8–91; it reads NEVIVVEGRD…AFLNRDEARP (84 aa). Residues Glu14, Asp60, and Asp62 each coordinate Mg(2+).

It belongs to the ribonuclease M5 family. It depends on Mg(2+) as a cofactor.

Its subcellular location is the cytoplasm. It catalyses the reaction Endonucleolytic cleavage of RNA, removing 21 and 42 nucleotides, respectively, from the 5'- and 3'-termini of a 5S-rRNA precursor.. Its function is as follows. Required for correct processing of both the 5' and 3' ends of 5S rRNA precursor. Cleaves both sides of a double-stranded region yielding mature 5S rRNA in one step. This is Ribonuclease M5 from Lactococcus lactis subsp. lactis (strain IL1403) (Streptococcus lactis).